The primary structure comprises 780 residues: Pentatricopeptide repeat-containing protein At1g79540 (780 aa).

17 PPR repeats span residues 91 to 125 (SRES…GVSV), 126 to 160 (DSYC…DCRP), 161 to 196 (DVFT…NCSP), 197 to 231 (NLYT…GISP), 232 to 266 (NRVT…GNYP), 267 to 301 (DSVA…GFVL), 302 to 336 (GLRG…NIKP), 337 to 371 (DIIL…GISP), 372 to 406 (DTYC…ESFP), 407 to 441 (DACT…GCSP), 442 to 476 (SVAT…RPAS), 481 to 515 (LSHS…GSSP), 516 to 550 (DIVS…GLSP), 551 to 585 (DSVT…RHSP), 653 to 687 (TLGP…KILV), 688 to 722 (TPPS…NFKL), and 723 to 758 (MPRV…GYNV).

This sequence belongs to the PPR family. P subfamily.

The protein is Pentatricopeptide repeat-containing protein At1g79540 of Arabidopsis thaliana (Mouse-ear cress).